The following is a 587-amino-acid chain: MESNHKSGDGLSGTQKEAALRALIQRTGYSLVQENGQRKYGGPPPGWDAAPPERGCEIFIGKLPRDLFEDELIPLCEKIGKIYEMRMMMDFNGNNRGYAFVTFSNKLEAKNAIKQLNNYEIRNGRLLGVCASVDNCRLFVGGIPKTKKREEILSEMKKVTEGVVDVIVYPSAADKTKNRGFAFVEYESHRAAAMARRKLLPGRIQLWGHPIAVDWAEPEVEVDEDTMSSVKILYVRNLMLSTSEEMIEKEFNNIKPGAVERVKKIRDYAFVHFSNREDAVEAMKALNGKVLDGSPIEVTLAKPVDKDSYVRYTRGTGGRGTMLQGEYTYSLGQVYDPTTTYLGAPVFYAPQAYAAIPSLHFPATKGHLSNRAIIRAPSVRGAAGVRGLGGRGYLAYTGLGRGYQVKGDKREDKLYDILPGMELTPMNPVTLKPQGIKLAPQILEEICQKNNWGQPVYQLHSAIGQDQRQLFLYKITIPALASQNPAIHPFTPPKLSAYVDEAKTYAAEYTLQTLGIPTDGGDAGTMATAAAVATAFPGYAVPNATAPVSAAQLKQAVTLGQDLAAYTTYEVYPTFAVTARGDGYGAF.

RRM domains lie at Cys56–Asp134, Cys136–Pro218, and Lys231–Pro303. Positions His360–Lys409 are required for nuclear localization. Thr491 carries the phosphothreonine modification.

Part of the apolipoprotein B mRNA editing complex with APOBEC1. Interacts with TNPO2; TNPO2 may be responsible for transport of A1CF into the nucleus. Interacts with SYNCRIP. Interacts with CELF2/CUGBP2. Interacts with RBM47.

It is found in the nucleus. The protein resides in the endoplasmic reticulum. The protein localises to the cytoplasm. Essential component of the apolipoprotein B mRNA editing enzyme complex which is responsible for the postranscriptional editing of a CAA codon for Gln to a UAA codon for stop in APOB mRNA. Binds to APOB mRNA and is probably responsible for docking the catalytic subunit, APOBEC1, to the mRNA to allow it to deaminate its target cytosine. The complex also seems to protect the edited APOB mRNA from nonsense-mediated decay. The protein is APOBEC1 complementation factor (A1CF) of Pongo abelii (Sumatran orangutan).